The sequence spans 227 residues: Cytochrome c oxidase subunit 2 (227 aa).

The Mitochondrial intermembrane portion of the chain corresponds to 1 to 14; the sequence is MAYPLQLGLQDATS. The chain crosses the membrane as a helical span at residues 15 to 45; sequence PIMEELTSFHDHTLMIVFLISSLVLYIISSM. At 46-59 the chain is on the mitochondrial matrix side; it reads LTTKMTHTNTMDAQ. A helical transmembrane segment spans residues 60–87; it reads GVETIWTILPAAILVLIALPSLRILYMM. Over 88–227 the chain is Mitochondrial intermembrane; it reads DEINNPALTV…HFENWSASMI (140 aa). Histidine 161, cysteine 196, glutamate 198, cysteine 200, histidine 204, and methionine 207 together coordinate Cu cation. Glutamate 198 provides a ligand contact to Mg(2+).

This sequence belongs to the cytochrome c oxidase subunit 2 family. Component of the cytochrome c oxidase (complex IV, CIV), a multisubunit enzyme composed of 14 subunits. The complex is composed of a catalytic core of 3 subunits MT-CO1, MT-CO2 and MT-CO3, encoded in the mitochondrial DNA, and 11 supernumerary subunits COX4I, COX5A, COX5B, COX6A, COX6B, COX6C, COX7A, COX7B, COX7C, COX8 and NDUFA4, which are encoded in the nuclear genome. The complex exists as a monomer or a dimer and forms supercomplexes (SCs) in the inner mitochondrial membrane with NADH-ubiquinone oxidoreductase (complex I, CI) and ubiquinol-cytochrome c oxidoreductase (cytochrome b-c1 complex, complex III, CIII), resulting in different assemblies (supercomplex SCI(1)III(2)IV(1) and megacomplex MCI(2)III(2)IV(2)). Found in a complex with TMEM177, COA6, COX18, COX20, SCO1 and SCO2. Interacts with TMEM177 in a COX20-dependent manner. Interacts with COX20. Interacts with COX16. Cu cation is required as a cofactor.

Its subcellular location is the mitochondrion inner membrane. It carries out the reaction 4 Fe(II)-[cytochrome c] + O2 + 8 H(+)(in) = 4 Fe(III)-[cytochrome c] + 2 H2O + 4 H(+)(out). Component of the cytochrome c oxidase, the last enzyme in the mitochondrial electron transport chain which drives oxidative phosphorylation. The respiratory chain contains 3 multisubunit complexes succinate dehydrogenase (complex II, CII), ubiquinol-cytochrome c oxidoreductase (cytochrome b-c1 complex, complex III, CIII) and cytochrome c oxidase (complex IV, CIV), that cooperate to transfer electrons derived from NADH and succinate to molecular oxygen, creating an electrochemical gradient over the inner membrane that drives transmembrane transport and the ATP synthase. Cytochrome c oxidase is the component of the respiratory chain that catalyzes the reduction of oxygen to water. Electrons originating from reduced cytochrome c in the intermembrane space (IMS) are transferred via the dinuclear copper A center (CU(A)) of subunit 2 and heme A of subunit 1 to the active site in subunit 1, a binuclear center (BNC) formed by heme A3 and copper B (CU(B)). The BNC reduces molecular oxygen to 2 water molecules using 4 electrons from cytochrome c in the IMS and 4 protons from the mitochondrial matrix. This chain is Cytochrome c oxidase subunit 2 (MT-CO2), found in Acomys ignitus (Fiery spiny mouse).